Consider the following 297-residue polypeptide: ClpXP adapter protein SpxH (297 aa).

Belongs to the SpxH family. In terms of assembly, interacts with Spx.

It is found in the cytoplasm. Its function is as follows. Adapter protein required for efficient degradation of Spx by ClpXP under non-stress conditions. Interaction with Spx stabilizes Spx and exposes the C-terminus of Spx for recognition and proteolysis by ClpXP. This is ClpXP adapter protein SpxH from Bacillus cereus (strain ATCC 14579 / DSM 31 / CCUG 7414 / JCM 2152 / NBRC 15305 / NCIMB 9373 / NCTC 2599 / NRRL B-3711).